Here is a 201-residue protein sequence, read N- to C-terminus: dITP/XTP pyrophosphatase (201 aa).

Position 8-13 (8-13 (TNNENK)) interacts with substrate. Residues E41 and D73 each contribute to the Mg(2+) site. The active-site Proton acceptor is the D73. Substrate is bound by residues S74, 154–157 (FGYD), K177, and 182–183 (HR).

The protein belongs to the HAM1 NTPase family. In terms of assembly, homodimer. Mg(2+) is required as a cofactor.

The catalysed reaction is XTP + H2O = XMP + diphosphate + H(+). It carries out the reaction dITP + H2O = dIMP + diphosphate + H(+). The enzyme catalyses ITP + H2O = IMP + diphosphate + H(+). Functionally, pyrophosphatase that catalyzes the hydrolysis of nucleoside triphosphates to their monophosphate derivatives, with a high preference for the non-canonical purine nucleotides XTP (xanthosine triphosphate), dITP (deoxyinosine triphosphate) and ITP. Seems to function as a house-cleaning enzyme that removes non-canonical purine nucleotides from the nucleotide pool, thus preventing their incorporation into DNA/RNA and avoiding chromosomal lesions. This chain is dITP/XTP pyrophosphatase, found in Clostridium tetani (strain Massachusetts / E88).